We begin with the raw amino-acid sequence, 393 residues long: Methylthioribose-1-phosphate isomerase (393 aa).

Aspartate 265 functions as the Proton donor in the catalytic mechanism.

Belongs to the eIF-2B alpha/beta/delta subunits family. MtnA subfamily.

It localises to the cytoplasm. The protein localises to the nucleus. It carries out the reaction 5-(methylsulfanyl)-alpha-D-ribose 1-phosphate = 5-(methylsulfanyl)-D-ribulose 1-phosphate. It functions in the pathway amino-acid biosynthesis; L-methionine biosynthesis via salvage pathway; L-methionine from S-methyl-5-thio-alpha-D-ribose 1-phosphate: step 1/6. Functionally, catalyzes the interconversion of methylthioribose-1-phosphate (MTR-1-P) into methylthioribulose-1-phosphate (MTRu-1-P). The protein is Methylthioribose-1-phosphate isomerase of Cryptococcus neoformans var. neoformans serotype D (strain B-3501A) (Filobasidiella neoformans).